Here is a 552-residue protein sequence, read N- to C-terminus: CTP synthase (552 aa).

Positions 1–273 (MSESKKNPET…LTPIARRFNM (273 aa)) are amidoligase domain. CTP is bound at residue Ser21. Residue Ser21 participates in UTP binding. ATP is bound by residues 22–27 (SLGKGI) and Asp79. Mg(2+)-binding residues include Asp79 and Glu147. CTP contacts are provided by residues 154-156 (DIE), 194-199 (KTKPTQ), and Lys230. UTP contacts are provided by residues 194 to 199 (KTKPTQ) and Lys230. The Glutamine amidotransferase type-1 domain maps to 298 to 548 (TIAFVGKYLS…IQKSLELKKV (251 aa)). Gly359 is a binding site for L-glutamine. The active-site Nucleophile; for glutamine hydrolysis is Cys386. L-glutamine is bound by residues 387–390 (LGMQ), Glu410, and Arg478. Catalysis depends on residues His521 and Glu523.

This sequence belongs to the CTP synthase family. As to quaternary structure, homotetramer.

The catalysed reaction is UTP + L-glutamine + ATP + H2O = CTP + L-glutamate + ADP + phosphate + 2 H(+). The enzyme catalyses L-glutamine + H2O = L-glutamate + NH4(+). It catalyses the reaction UTP + NH4(+) + ATP = CTP + ADP + phosphate + 2 H(+). Its pathway is pyrimidine metabolism; CTP biosynthesis via de novo pathway; CTP from UDP: step 2/2. Allosterically activated by GTP, when glutamine is the substrate; GTP has no effect on the reaction when ammonia is the substrate. The allosteric effector GTP functions by stabilizing the protein conformation that binds the tetrahedral intermediate(s) formed during glutamine hydrolysis. Inhibited by the product CTP, via allosteric rather than competitive inhibition. Functionally, catalyzes the ATP-dependent amination of UTP to CTP with either L-glutamine or ammonia as the source of nitrogen. Regulates intracellular CTP levels through interactions with the four ribonucleotide triphosphates. This is CTP synthase from Wolinella succinogenes (strain ATCC 29543 / DSM 1740 / CCUG 13145 / JCM 31913 / LMG 7466 / NCTC 11488 / FDC 602W) (Vibrio succinogenes).